Reading from the N-terminus, the 139-residue chain is Large ribosomal subunit protein bL21 (139 aa).

The protein belongs to the bacterial ribosomal protein bL21 family. In terms of assembly, part of the 50S ribosomal subunit. Contacts protein L20.

Functionally, this protein binds to 23S rRNA in the presence of protein L20. This is Large ribosomal subunit protein bL21 from Prochlorococcus marinus (strain NATL2A).